Reading from the N-terminus, the 78-residue chain is Large ribosomal subunit protein bL28 (78 aa).

This sequence belongs to the bacterial ribosomal protein bL28 family.

This Flavobacterium johnsoniae (strain ATCC 17061 / DSM 2064 / JCM 8514 / BCRC 14874 / CCUG 350202 / NBRC 14942 / NCIMB 11054 / UW101) (Cytophaga johnsonae) protein is Large ribosomal subunit protein bL28.